Here is a 375-residue protein sequence, read N- to C-terminus: 4-hydroxy-3-methylbut-2-en-1-yl diphosphate synthase (flavodoxin) (375 aa).

[4Fe-4S] cluster contacts are provided by cysteine 270, cysteine 273, cysteine 305, and glutamate 312.

The protein belongs to the IspG family. Requires [4Fe-4S] cluster as cofactor.

The enzyme catalyses (2E)-4-hydroxy-3-methylbut-2-enyl diphosphate + oxidized [flavodoxin] + H2O + 2 H(+) = 2-C-methyl-D-erythritol 2,4-cyclic diphosphate + reduced [flavodoxin]. The protein operates within isoprenoid biosynthesis; isopentenyl diphosphate biosynthesis via DXP pathway; isopentenyl diphosphate from 1-deoxy-D-xylulose 5-phosphate: step 5/6. Functionally, converts 2C-methyl-D-erythritol 2,4-cyclodiphosphate (ME-2,4cPP) into 1-hydroxy-2-methyl-2-(E)-butenyl 4-diphosphate. The polypeptide is 4-hydroxy-3-methylbut-2-en-1-yl diphosphate synthase (flavodoxin) (Yersinia pestis (strain Pestoides F)).